A 704-amino-acid chain; its full sequence is Polyribonucleotide nucleotidyltransferase (704 aa).

Positions 491 and 497 each coordinate Mg(2+). The KH domain occupies 558–617 (PNYAVIEINSDKIRDVIGKGGATIRQLTEDTGAVIDIDDNGTIRIFGENKAATKEAIRQI). Residues 627–695 (GKVYKGTVAR…NRGRIKLTMK (69 aa)) enclose the S1 motif domain.

It belongs to the polyribonucleotide nucleotidyltransferase family. In terms of assembly, component of the RNA degradosome, which is a multiprotein complex involved in RNA processing and mRNA degradation. Requires Mg(2+) as cofactor.

The protein resides in the cytoplasm. It catalyses the reaction RNA(n+1) + phosphate = RNA(n) + a ribonucleoside 5'-diphosphate. Its function is as follows. Involved in mRNA degradation. Catalyzes the phosphorolysis of single-stranded polyribonucleotides processively in the 3'- to 5'-direction. This Psychrobacter sp. (strain PRwf-1) protein is Polyribonucleotide nucleotidyltransferase.